A 772-amino-acid polypeptide reads, in one-letter code: Probable beta-glucosidase M (772 aa).

The N-terminal stretch at 1–20 (MLTSWGKTGFVLALALGGRA) is a signal peptide. Asn-259 carries N-linked (GlcNAc...) asparagine glycosylation. Residue Asp-287 is part of the active site. Asn-315, Asn-322, Asn-438, Asn-523, Asn-547, Asn-574, and Asn-586 each carry an N-linked (GlcNAc...) asparagine glycan.

The protein belongs to the glycosyl hydrolase 3 family.

It is found in the secreted. It carries out the reaction Hydrolysis of terminal, non-reducing beta-D-glucosyl residues with release of beta-D-glucose.. The protein operates within glycan metabolism; cellulose degradation. Functionally, beta-glucosidases are one of a number of cellulolytic enzymes involved in the degradation of cellulosic biomass. Catalyzes the last step releasing glucose from the inhibitory cellobiose. The chain is Probable beta-glucosidase M (bglM) from Emericella nidulans (strain FGSC A4 / ATCC 38163 / CBS 112.46 / NRRL 194 / M139) (Aspergillus nidulans).